Here is a 347-residue protein sequence, read N- to C-terminus: DNA-directed RNA polymerase subunit alpha (347 aa).

The alpha N-terminal domain (alpha-NTD) stretch occupies residues 1–243 (MLIKQGDRLI…DQISVFINFD (243 aa)). Positions 260–347 (VNENLFKGID…EWKRKQQNEA (88 aa)) are alpha C-terminal domain (alpha-CTD).

The protein belongs to the RNA polymerase alpha chain family. As to quaternary structure, homodimer. The RNAP catalytic core consists of 2 alpha, 1 beta, 1 beta' and 1 omega subunit. When a sigma factor is associated with the core the holoenzyme is formed, which can initiate transcription.

The catalysed reaction is RNA(n) + a ribonucleoside 5'-triphosphate = RNA(n+1) + diphosphate. In terms of biological role, DNA-dependent RNA polymerase catalyzes the transcription of DNA into RNA using the four ribonucleoside triphosphates as substrates. The protein is DNA-directed RNA polymerase subunit alpha of Nitratidesulfovibrio vulgaris (strain DSM 19637 / Miyazaki F) (Desulfovibrio vulgaris).